Here is a 1100-residue protein sequence, read N- to C-terminus: Exportin-T (1100 aa).

The protein belongs to the exportin family. As to quaternary structure, interacts with GSP1, GSP2, NSP1, NUP2 and UTP8.

It localises to the nucleus. The protein localises to the cytoplasm. Its function is as follows. tRNA nucleus export receptor which facilitates tRNA translocation across the nuclear pore complex. Preferentially interacts with tRNAs with mature 5'- and 3'-termini and does not distinguish between intron-containing and spliced tRNAs. In the nucleus binds to tRNA and to the Ran-GTPases GSP1 or GSP2 in their active GTP-bound form. Docking of this trimeric complex to the nuclear pore complex (NPC) is mediated through binding to nucleoporins. Upon transit of a nuclear export complex into the cytoplasm, disassembling of the complex and hydrolysis of Ran-GTP to Ran-GDP cause release of the tRNA from the export receptor. The directionality of nuclear export is thought to be conferred by an asymmetric distribution of the GTP- and GDP-bound forms of Ran between the cytoplasm and nucleus. Involved in pre-tRNA splicing, probably by affecting the interaction of pre-tRNA with splicing endonuclease. In Saccharomyces cerevisiae (strain YJM789) (Baker's yeast), this protein is Exportin-T (LOS1).